The sequence spans 152 residues: Protein-export protein SecB (152 aa).

It belongs to the SecB family. In terms of assembly, homotetramer, a dimer of dimers. One homotetramer interacts with 1 SecA dimer.

Its subcellular location is the cytoplasm. In terms of biological role, one of the proteins required for the normal export of preproteins out of the cell cytoplasm. It is a molecular chaperone that binds to a subset of precursor proteins, maintaining them in a translocation-competent state. It also specifically binds to its receptor SecA. The protein is Protein-export protein SecB of Rickettsia africae (strain ESF-5).